The following is a 102-amino-acid chain: Small ribosomal subunit protein uS10 (102 aa).

This sequence belongs to the universal ribosomal protein uS10 family. Part of the 30S ribosomal subunit.

Its function is as follows. Involved in the binding of tRNA to the ribosomes. This Leptospira biflexa serovar Patoc (strain Patoc 1 / Ames) protein is Small ribosomal subunit protein uS10.